The following is an 86-amino-acid chain: MAKEELIEMQGKVDEVLPDARYRVTLDNGHQLIAYTGGKMRKFRIRILAGDLVTLEMSPYDLNKGRVTFRHIENRTRTTPPARRRH.

Positions Met1–Ile72 constitute an S1-like domain.

The protein belongs to the IF-1 family. As to quaternary structure, component of the 30S ribosomal translation pre-initiation complex which assembles on the 30S ribosome in the order IF-2 and IF-3, IF-1 and N-formylmethionyl-tRNA(fMet); mRNA recruitment can occur at any time during PIC assembly.

The protein localises to the cytoplasm. Functionally, one of the essential components for the initiation of protein synthesis. Stabilizes the binding of IF-2 and IF-3 on the 30S subunit to which N-formylmethionyl-tRNA(fMet) subsequently binds. Helps modulate mRNA selection, yielding the 30S pre-initiation complex (PIC). Upon addition of the 50S ribosomal subunit IF-1, IF-2 and IF-3 are released leaving the mature 70S translation initiation complex. This is Translation initiation factor IF-1 3 from Acidovorax sp. (strain JS42).